Consider the following 277-residue polypeptide: Acetyl-coenzyme A carboxylase carboxyl transferase subunit beta (277 aa).

The CoA carboxyltransferase N-terminal domain maps to 22-277 (LWTKCPGCNR…TLKQLLYFLT (256 aa)). Residues Cys-26, Cys-29, Cys-45, and Cys-48 each coordinate Zn(2+). The segment at 26-48 (CPGCNRFLYTKELELNQSVCHYC) adopts a C4-type zinc-finger fold.

The protein belongs to the AccD/PCCB family. Acetyl-CoA carboxylase is a heterohexamer composed of biotin carboxyl carrier protein (AccB), biotin carboxylase (AccC) and two subunits each of ACCase subunit alpha (AccA) and ACCase subunit beta (AccD). Zn(2+) serves as cofactor.

Its subcellular location is the cytoplasm. It catalyses the reaction N(6)-carboxybiotinyl-L-lysyl-[protein] + acetyl-CoA = N(6)-biotinyl-L-lysyl-[protein] + malonyl-CoA. Its pathway is lipid metabolism; malonyl-CoA biosynthesis; malonyl-CoA from acetyl-CoA: step 1/1. Its function is as follows. Component of the acetyl coenzyme A carboxylase (ACC) complex. Biotin carboxylase (BC) catalyzes the carboxylation of biotin on its carrier protein (BCCP) and then the CO(2) group is transferred by the transcarboxylase to acetyl-CoA to form malonyl-CoA. The protein is Acetyl-coenzyme A carboxylase carboxyl transferase subunit beta of Methylacidiphilum infernorum (isolate V4) (Methylokorus infernorum (strain V4)).